The following is a 271-amino-acid chain: Potential ATP-binding protein (271 aa).

34–41 (GQPGVGKT) lines the ATP pocket.

The polypeptide is Potential ATP-binding protein (Staphylococcus aureus).